A 747-amino-acid polypeptide reads, in one-letter code: Protein neuralized (747 aa).

An NHR 1 domain is found at 97–251 (PLQFHTVHGD…NCTGIEFLDA (155 aa)). The span at 280 to 292 (LPQQQQQLPQQQL) shows a compositional bias: low complexity. The segment at 280 to 309 (LPQQQQQLPQQQLTAHHPLQQSRRSLPGGT) is disordered. The NHR 2 domain occupies 359–514 (PVPFHITKGR…STQSLRMFRQ (156 aa)). Residues 694-735 (CTICYENPIDSVLYMCGHMCMCYDCAIEQWRGVGGGQCPLCR) form an RING-type zinc finger.

Its subcellular location is the nucleus. In terms of biological role, involved in neurogenesis. Interacts with other neurogenic proteins in the specification of the neuroblast versus epidermoblast cell fate. In Drosophila virilis (Fruit fly), this protein is Protein neuralized (neur).